A 145-amino-acid polypeptide reads, in one-letter code: Probable WRKY transcription factor 75 (145 aa).

Residues 20 to 38 show a composition bias toward basic and acidic residues; the sequence is SKPELHQGEEESSKVRSEG. A disordered region spans residues 20–55; the sequence is SKPELHQGEEESSKVRSEGCSKSVESSKKKGKKQRY. The segment at residues 61–126 is a DNA-binding region (WRKY); the sequence is SQVDILDDGY…YEGVHSHPIE (66 aa).

It belongs to the WRKY group II-c family.

The protein resides in the nucleus. Transcription factor. Interacts specifically with the W box (5'-(T)TGAC[CT]-3'), a frequently occurring elicitor-responsive cis-acting element. In Arabidopsis thaliana (Mouse-ear cress), this protein is Probable WRKY transcription factor 75 (WRKY75).